The chain runs to 449 residues: Glutamyl-tRNA reductase (449 aa).

Substrate-binding positions include 49 to 52 (TCNR), Ser109, 114 to 116 (ETQ), and Gln120. Cys50 (nucleophile) is an active-site residue. Position 189–194 (189–194 (GAGKMS)) interacts with NADP(+). The interval 427 to 449 (NFTHPREEMEESDEKRSYCGESR) is disordered.

This sequence belongs to the glutamyl-tRNA reductase family. Homodimer.

It catalyses the reaction (S)-4-amino-5-oxopentanoate + tRNA(Glu) + NADP(+) = L-glutamyl-tRNA(Glu) + NADPH + H(+). The protein operates within porphyrin-containing compound metabolism; protoporphyrin-IX biosynthesis; 5-aminolevulinate from L-glutamyl-tRNA(Glu): step 1/2. Catalyzes the NADPH-dependent reduction of glutamyl-tRNA(Glu) to glutamate 1-semialdehyde (GSA). In Carboxydothermus hydrogenoformans (strain ATCC BAA-161 / DSM 6008 / Z-2901), this protein is Glutamyl-tRNA reductase.